A 359-amino-acid polypeptide reads, in one-letter code: 4-hydroxy-tetrahydrodipicolinate synthase, chloroplastic (359 aa).

The N-terminal 33 residues, 1 to 33, are a transit peptide targeting the chloroplast; sequence MSSSIIGRCHFVADSIEAAGTKRRTTRWRSPRA. Residue threonine 102 participates in pyruvate binding. Residue tyrosine 188 is the Proton donor/acceptor of the active site. Residue lysine 216 is the Schiff-base intermediate with substrate of the active site. Position 255 (isoleucine 255) interacts with pyruvate.

It belongs to the DapA family.

The protein resides in the plastid. Its subcellular location is the chloroplast. It carries out the reaction L-aspartate 4-semialdehyde + pyruvate = (2S,4S)-4-hydroxy-2,3,4,5-tetrahydrodipicolinate + H2O + H(+). It functions in the pathway amino-acid biosynthesis; L-lysine biosynthesis via DAP pathway; (S)-tetrahydrodipicolinate from L-aspartate: step 3/4. Functionally, catalyzes the condensation of (S)-aspartate-beta-semialdehyde [(S)-ASA] and pyruvate to 4-hydroxy-tetrahydrodipicolinate (HTPA). The sequence is that of 4-hydroxy-tetrahydrodipicolinate synthase, chloroplastic (DHPS1) from Nicotiana tabacum (Common tobacco).